Here is a 728-residue protein sequence, read N- to C-terminus: 1,4-alpha-glucan branching enzyme GlgB (728 aa).

Catalysis depends on Asp-405, which acts as the Nucleophile. Residue Glu-458 is the Proton donor of the active site.

Belongs to the glycosyl hydrolase 13 family. GlgB subfamily. As to quaternary structure, monomer.

It carries out the reaction Transfers a segment of a (1-&gt;4)-alpha-D-glucan chain to a primary hydroxy group in a similar glucan chain.. Its pathway is glycan biosynthesis; glycogen biosynthesis. In terms of biological role, catalyzes the formation of the alpha-1,6-glucosidic linkages in glycogen by scission of a 1,4-alpha-linked oligosaccharide from growing alpha-1,4-glucan chains and the subsequent attachment of the oligosaccharide to the alpha-1,6 position. The chain is 1,4-alpha-glucan branching enzyme GlgB from Escherichia coli O157:H7.